We begin with the raw amino-acid sequence, 251 residues long: Cell division protein ZapD (251 aa).

This sequence belongs to the ZapD family. As to quaternary structure, interacts with FtsZ.

Its subcellular location is the cytoplasm. In terms of biological role, cell division factor that enhances FtsZ-ring assembly. Directly interacts with FtsZ and promotes bundling of FtsZ protofilaments, with a reduction in FtsZ GTPase activity. The protein is Cell division protein ZapD of Burkholderia cenocepacia (strain ATCC BAA-245 / DSM 16553 / LMG 16656 / NCTC 13227 / J2315 / CF5610) (Burkholderia cepacia (strain J2315)).